The primary structure comprises 20 residues: Photosystem II stability/assembly factor HCF136, chloroplastic (20 aa).

This sequence belongs to the Ycf48 family.

It is found in the plastid. Its subcellular location is the chloroplast thylakoid lumen. Essential for photosystem II (PSII) biogenesis; required for assembly of an early intermediate in PSII assembly that includes D2 (psbD) and cytochrome b559. The protein is Photosystem II stability/assembly factor HCF136, chloroplastic of Spinacia oleracea (Spinach).